The chain runs to 109 residues: Iron-sulfur cluster assembly protein CyaY (109 aa).

The protein belongs to the frataxin family.

Functionally, involved in iron-sulfur (Fe-S) cluster assembly. May act as a regulator of Fe-S biogenesis. The chain is Iron-sulfur cluster assembly protein CyaY from Bordetella bronchiseptica (strain ATCC BAA-588 / NCTC 13252 / RB50) (Alcaligenes bronchisepticus).